We begin with the raw amino-acid sequence, 372 residues long: 4-hydroxy-3-methylbut-2-en-1-yl diphosphate synthase (flavodoxin) (372 aa).

[4Fe-4S] cluster is bound by residues C270, C273, C305, and E312.

Belongs to the IspG family. The cofactor is [4Fe-4S] cluster.

It carries out the reaction (2E)-4-hydroxy-3-methylbut-2-enyl diphosphate + oxidized [flavodoxin] + H2O + 2 H(+) = 2-C-methyl-D-erythritol 2,4-cyclic diphosphate + reduced [flavodoxin]. Its pathway is isoprenoid biosynthesis; isopentenyl diphosphate biosynthesis via DXP pathway; isopentenyl diphosphate from 1-deoxy-D-xylulose 5-phosphate: step 5/6. Functionally, converts 2C-methyl-D-erythritol 2,4-cyclodiphosphate (ME-2,4cPP) into 1-hydroxy-2-methyl-2-(E)-butenyl 4-diphosphate. The polypeptide is 4-hydroxy-3-methylbut-2-en-1-yl diphosphate synthase (flavodoxin) (Vibrio campbellii (strain ATCC BAA-1116)).